A 183-amino-acid polypeptide reads, in one-letter code: Probable transcription termination protein NusA (183 aa).

Residues 32–98 (DERVAFIVKE…DDVWVKRVGK (67 aa)) form the KH domain. A disordered region spans residues 149–183 (RKRAKRPVVKDQQQEQTETKQETDVQQDVKETVKE). The span at 156 to 183 (VVKDQQQEQTETKQETDVQQDVKETVKE) shows a compositional bias: basic and acidic residues.

Belongs to the NusA family.

Its subcellular location is the cytoplasm. Participates in transcription termination. The chain is Probable transcription termination protein NusA from Methanocaldococcus jannaschii (strain ATCC 43067 / DSM 2661 / JAL-1 / JCM 10045 / NBRC 100440) (Methanococcus jannaschii).